The primary structure comprises 1066 residues: Bifunctional cytochrome P450/NADPH--P450 reductase (1066 aa).

Residues 1-480 are cytochrome P450; sequence MAESVPIPEP…LAGNGATSSS (480 aa). Cysteine 407 contributes to the heme binding site. The interval 481–1066 is NADPH-P-450 reductase; that stretch reads THNIKAAANL…NERFATDVFD (586 aa). Residues 500–641 enclose the Flavodoxin-like domain; sequence MAIFYGSNSG…DFEAWEDIVL (142 aa). FMN is bound by residues 506–511, 554–557, cysteine 588, and threonine 596; these read SNSGTC and SYEG. The FAD-binding FR-type domain occupies 676–904; that stretch reads QDVEEALVVA…RASSEAFHLP (229 aa).

In the N-terminal section; belongs to the cytochrome P450 family. Requires FAD as cofactor. FMN serves as cofactor. It depends on heme as a cofactor.

The protein resides in the membrane. The catalysed reaction is an organic molecule + reduced [NADPH--hemoprotein reductase] + O2 = an alcohol + oxidized [NADPH--hemoprotein reductase] + H2O + H(+). It catalyses the reaction 2 oxidized [cytochrome P450] + NADPH = 2 reduced [cytochrome P450] + NADP(+) + H(+). Its activity is regulated as follows. Stimulated NADPH--cytochrome reductase activity in the presence of substrate. Inhibited by fatty acid substrates longer than 13 carbons and the degree of inhibition increases with increasing chain length. Functionally, functions as a fatty acid monooxygenase. Catalyzes hydroxylation of fatty acids at omega-1, omega-2 and omega-3 positions. Shows activity toward fatty acids with a chain length of 9-18 carbons with optimum chain lengths of 12-14 carbons (lauric, tridecylic and myristic acids). Can also use shorter saturated fatty acids with a chain length of 9 or 10 carbons as substrates. Also displays a NADPH-dependent reductase activity in the C-terminal domain, which allows electron transfer from NADPH to the heme iron of the cytochrome P450 N-terminal domain. This chain is Bifunctional cytochrome P450/NADPH--P450 reductase, found in Fusarium oxysporum (Fusarium vascular wilt).